Reading from the N-terminus, the 350-residue chain is Phospho-2-dehydro-3-deoxyheptonate aldolase, Phe-sensitive (350 aa).

At Lys244 the chain carries N6-acetyllysine.

This sequence belongs to the class-I DAHP synthase family. Homotetramer.

It catalyses the reaction D-erythrose 4-phosphate + phosphoenolpyruvate + H2O = 7-phospho-2-dehydro-3-deoxy-D-arabino-heptonate + phosphate. It functions in the pathway metabolic intermediate biosynthesis; chorismate biosynthesis; chorismate from D-erythrose 4-phosphate and phosphoenolpyruvate: step 1/7. Functionally, stereospecific condensation of phosphoenolpyruvate (PEP) and D-erythrose-4-phosphate (E4P) giving rise to 3-deoxy-D-arabino-heptulosonate-7-phosphate (DAHP). In Escherichia coli O157:H7, this protein is Phospho-2-dehydro-3-deoxyheptonate aldolase, Phe-sensitive (aroG).